Reading from the N-terminus, the 251-residue chain is 4-hydroxy-tetrahydrodipicolinate reductase (251 aa).

NAD(+) contacts are provided by residues 9-14, 85-87, and 109-112; these read GCNGKM, ATT, and SANM. The active-site Proton donor/acceptor is His141. His142 serves as a coordination point for (S)-2,3,4,5-tetrahydrodipicolinate. The active-site Proton donor is Lys145. 151–152 serves as a coordination point for (S)-2,3,4,5-tetrahydrodipicolinate; that stretch reads GT.

It belongs to the DapB family.

The protein resides in the cytoplasm. The catalysed reaction is (S)-2,3,4,5-tetrahydrodipicolinate + NAD(+) + H2O = (2S,4S)-4-hydroxy-2,3,4,5-tetrahydrodipicolinate + NADH + H(+). It catalyses the reaction (S)-2,3,4,5-tetrahydrodipicolinate + NADP(+) + H2O = (2S,4S)-4-hydroxy-2,3,4,5-tetrahydrodipicolinate + NADPH + H(+). It participates in amino-acid biosynthesis; L-lysine biosynthesis via DAP pathway; (S)-tetrahydrodipicolinate from L-aspartate: step 4/4. Functionally, catalyzes the conversion of 4-hydroxy-tetrahydrodipicolinate (HTPA) to tetrahydrodipicolinate. This is 4-hydroxy-tetrahydrodipicolinate reductase from Caldanaerobacter subterraneus subsp. tengcongensis (strain DSM 15242 / JCM 11007 / NBRC 100824 / MB4) (Thermoanaerobacter tengcongensis).